We begin with the raw amino-acid sequence, 908 residues long: MSVAATKSEISHNPGKMSVTSAVSGEKVEGDVQSRMKLFGAIQAFRDGRMPDNEQIGSVLEYAIGHSPVDLQKLSPEGRVLIEDFRDTLETLRMIVHEKNSDELFQNAVWSSYHGDVSKAKQDGVIPVSNEQAKQDGKTAASHIRVLITLFLTNSEARKLLKDFGIVGRDIFATAATKAADKSRPSQEKLDSVDQEAPSHEWIGADGKRLGPNETPDIQIKGPGGTQARYHPRDDPRDAQLVDDKGKTRSAGEAYNQAQEAKSDAQSKAQDLKSSARDYKETGKQQARSHAQDVAGNRDPNASLSEQKEQVKGAAYDKRDAANAQADQNLPDPNDEGNQEKARGKAAALRDRIPEEHRQKAADYIQKSKNFVNDELPEERRDQFIYRLKKVVVECQGHKDYQEAMTWLLDTLENYRGHAKHVANKGTESAQTVANDPAVGDSTIQFRTLLERFANGKSLDNVFSALDQIYTDVQNDSELREWFTTFNDYMHRVLLEPGYILDEDSDREARQLRESGRRFFQDKYKAHQELLFDELQVWLTAFGEDPLNVRLGDDIKRFCKDLLFNHEGNLTFKPKLWNDVRQVLLPMLLKQVSYVPIPRAEYSDNSIDLVIEDLILSGPNLFPNLVHIESFNSFSFSPYPKLNKTMDNQHHKFRLSLSQIQADIRDVAFAFRRKSGWPKLSDHGLADVVLAGKGISVDVELESIENRRDTVFKTNFIHVNIDTLKFSIRNSKHDLLYKFIKSTATGLIKRAITAAVQNAMHTALGHLDEQLVEVRNRVDEAKQSDETTRTQALKDLYSRKKESAQEKKAAADEKTGTFKIITDRDSQLNPELTHDGGKSWAKRAFKVEDAARTGKEWRSPAFNLIDPAHPAVTGQHHPAVQNADVESEKLKQRAEAAAPGVAAGTKRM.

Disordered stretches follow at residues 1–24 and 177–359; these read MSVAATKSEISHNPGKMSVTSAVS and TKAA…EHRQ. 5 stretches are compositionally biased toward basic and acidic residues: residues 179–192, 231–247, 261–283, 306–321, and 338–359; these read AADKSRPSQEKLDS, HPRDDPRDAQLVDDKGK, AKSDAQSKAQDLKSSARDYKETG, EQKEQVKGAAYDKRDA, and NQEKARGKAAALRDRIPEEHRQ. Residues 255–282 adopt a coiled-coil conformation; sequence YNQAQEAKSDAQSKAQDLKSSARDYKET.

In terms of processing, palmitoylated.

Functionally, may act as a negative regulator of mating during vegetative growth. This chain is Putative cell signaling protein HAM1, found in Cryptococcus neoformans var. grubii serotype A (strain H99 / ATCC 208821 / CBS 10515 / FGSC 9487) (Filobasidiella neoformans var. grubii).